A 136-amino-acid polypeptide reads, in one-letter code: Probable acyltransferase SID5 (136 aa).

The protein operates within siderophore biosynthesis. In terms of biological role, probable acyltransferase; part of the gene cluster that mediates the biosynthesis of hydroxamate-containing siderophores that play a critical role in virulence via intracellular iron acquisition during macrophage infection. The sequence is that of Probable acyltransferase SID5 from Ajellomyces capsulatus (Darling's disease fungus).